A 129-amino-acid chain; its full sequence is Type II secretion system protein I (129 aa).

The propeptide at 1–6 (MKRARG) is leader sequence. N-methylphenylalanine is present on F7. A helical transmembrane segment spans residues 7–27 (FTLLEVLVALAIFAMVAASVL).

Belongs to the GSP I family. Type II secretion is composed of four main components: the outer membrane complex, the inner membrane complex, the cytoplasmic secretion ATPase and the periplasm-spanning pseudopilus. Forms the tip of the type II pseudopilus by interacting with XcpU, XcpW and XcpX. Interacts with core component XcpT. Post-translationally, cleaved by prepilin peptidase. In terms of processing, methylated by prepilin peptidase at the amino group of the N-terminal phenylalanine once the leader sequence is cleaved by prepilin peptidase.

The protein resides in the cell inner membrane. Its function is as follows. Component of the type II secretion system required for the energy-dependent secretion of extracellular factors such as proteases and toxins from the periplasm. Part of the pseudopilus tip complex that is critical for the recognition and binding of secretion substrates. Type II pseudopilus confers increased bacterial adhesive capabilities. The polypeptide is Type II secretion system protein I (xcpV) (Pseudomonas aeruginosa (strain ATCC 15692 / DSM 22644 / CIP 104116 / JCM 14847 / LMG 12228 / 1C / PRS 101 / PAO1)).